The following is a 101-amino-acid chain: Small ribosomal subunit protein bS18c (101 aa).

This sequence belongs to the bacterial ribosomal protein bS18 family. As to quaternary structure, part of the 30S ribosomal subunit.

The protein resides in the plastid. The protein localises to the chloroplast. This chain is Small ribosomal subunit protein bS18c, found in Nymphaea alba (White water-lily).